A 299-amino-acid polypeptide reads, in one-letter code: 4-hydroxybenzoate octaprenyltransferase (299 aa).

7 helical membrane passes run 34 to 54 (IGSLLLLWPTWWALWLAADGL), 57 to 77 (LWTLFVFTAGVWLTRSAGCVI), 108 to 128 (LWVFVVLMLVAFALVFTLNWL), 163 to 183 (WGIPMAFAAVQGSVPVLGWLL), 221 to 241 (FDLVAQGILYALMFAVLALVD), 245 to 265 (DLGAAYWAGLGVAALLVAYEF), and 277 to 297 (FRAFLHNNWVGLAIFVGIAVA).

This sequence belongs to the UbiA prenyltransferase family. The cofactor is Mg(2+).

Its subcellular location is the cell inner membrane. It catalyses the reaction all-trans-octaprenyl diphosphate + 4-hydroxybenzoate = 4-hydroxy-3-(all-trans-octaprenyl)benzoate + diphosphate. It participates in cofactor biosynthesis; ubiquinone biosynthesis. Catalyzes the prenylation of para-hydroxybenzoate (PHB) with an all-trans polyprenyl group. Mediates the second step in the final reaction sequence of ubiquinone-8 (UQ-8) biosynthesis, which is the condensation of the polyisoprenoid side chain with PHB, generating the first membrane-bound Q intermediate 3-octaprenyl-4-hydroxybenzoate. The sequence is that of 4-hydroxybenzoate octaprenyltransferase from Xanthomonas oryzae pv. oryzae (strain MAFF 311018).